The primary structure comprises 293 residues: Decaprenyl diphosphate synthase (293 aa).

A disordered region spans residues Met-1–Pro-24. Asp-73 is a catalytic residue. Mg(2+) is bound at residue Asp-73. Substrate-binding positions include Gly-74–Arg-77, Trp-78, Arg-86, His-90, and Ser-118–Glu-120. Asn-121 serves as the catalytic Proton acceptor. Substrate contacts are provided by residues Trp-122, Arg-124, Arg-241, and Arg-247–Ser-249. Glu-260 contributes to the Mg(2+) binding site.

The protein belongs to the UPP synthase family. Homodimer. Mg(2+) serves as cofactor.

It is found in the cell membrane. It catalyses the reaction (2Z,6E)-farnesyl diphosphate + 7 isopentenyl diphosphate = (2Z,6Z,10Z,14Z,18Z,22Z,26Z,30Z,34E)-decaprenyl diphosphate + 7 diphosphate. The catalysed reaction is n isopentenyl diphosphate + (2E,6E)-farnesyl diphosphate = a di-trans,poly-cis-polyprenyl diphosphate + n diphosphate. Its function is as follows. Catalyzes the sequential condensation of isopentenyl diphosphate (IPP) in the cis configuration with (2Z,6E)-farnesyl diphosphate (Z-FPP or EZ-FPP) generating the 50 carbon product trans,polycis-decaprenyl diphosphate. When (2E,6E)-farnesyl diphosphate (E-FPP or EE-FPP) is used in vitro, both primary products decaprenyl diphosphate and heptaprenyl diphosphate are synthesized. It is probably due to the fact that M.smegmatis synthesizes both (2E,6E,10E)-geranylgeranyl diphosphate (EEE-GGPP) and (2E,6E,10Z)-geranylgeranyl diphosphate (EEZ-GGPP). Can also accept many different allylic substrates, including E-geranyl diphosphate (E-GPP), neryl diphosphate (NPP), and all-trans-geranyl-geranyl diphosphate. This chain is Decaprenyl diphosphate synthase (uppS), found in Mycolicibacterium smegmatis (strain ATCC 700084 / mc(2)155) (Mycobacterium smegmatis).